A 388-amino-acid polypeptide reads, in one-letter code: T-cell surface glycoprotein CD1e, membrane-associated (388 aa).

The first 19 residues, 1-19, serve as a signal peptide directing secretion; sequence MLLLFLLFEGLCCPGENTA. A propeptide spans 20–31 (removed in sCD1e); that stretch reads APQALQSYHLAA. 2 N-linked (GlcNAc...) asparagine glycosylation sites follow: asparagine 47 and asparagine 84. In terms of domain architecture, Ig-like spans 191 to 301; that stretch reads PRFLAGLMEA…LGGHDLIIHW (111 aa). A disulfide bridge connects residues cysteine 230 and cysteine 285. Residues 305 to 325 form a helical membrane-spanning segment; that stretch reads SIFLILICLTVIVTLVILVVV.

In terms of assembly, heterodimer with B2M (beta-2-microglobulin). The association with B2M appears to be facilitated by the presence of the propeptide. Mono-ubiquitinated. In terms of processing, proteolytically cleaved in late endosomes to yield a soluble form. As to expression, expressed on cortical thymocytes, dendritic cells, Langerhans cells, on certain T-cell leukemias, and in various other tissues.

It localises to the golgi apparatus membrane. Its subcellular location is the early endosome. The protein resides in the late endosome. It is found in the lysosome lumen. Functionally, T-cell surface glycoprotein CD1e, soluble binds diacetylated lipids, including phosphatidyl inositides and diacylated sulfoglycolipids, and is required for the presentation of glycolipid antigens on the cell surface. The membrane-associated form is not active. The polypeptide is T-cell surface glycoprotein CD1e, membrane-associated (CD1E) (Homo sapiens (Human)).